We begin with the raw amino-acid sequence, 350 residues long: Geranylgeranyl pyrophosphate synthase (350 aa).

Isopentenyl diphosphate is bound by residues Lys66, Arg69, and His98. Residues Asp105 and Asp109 each contribute to the Mg(2+) site. A dimethylallyl diphosphate-binding site is contributed by Arg114. Isopentenyl diphosphate is bound at residue Arg115. Residues Lys200, Thr201, Gln236, Asn243, and Lys263 each contribute to the dimethylallyl diphosphate site.

The protein belongs to the FPP/GGPP synthase family. The cofactor is Mg(2+).

The catalysed reaction is isopentenyl diphosphate + dimethylallyl diphosphate = (2E)-geranyl diphosphate + diphosphate. The enzyme catalyses isopentenyl diphosphate + (2E)-geranyl diphosphate = (2E,6E)-farnesyl diphosphate + diphosphate. It catalyses the reaction isopentenyl diphosphate + (2E,6E)-farnesyl diphosphate = (2E,6E,10E)-geranylgeranyl diphosphate + diphosphate. It functions in the pathway secondary metabolite biosynthesis; terpenoid biosynthesis. Its function is as follows. Geranylgeranyl pyrophosphate synthase; part of the gene cluster that mediates the biosynthesis of pleuromutilin, a tricyclic diterpene showing antibacterial properties. The geranylgeranyl diphosphate (GGPP) synthase catalyzes the first step in pleuromutilin biosynthesis. GGPP is then substrate of the premutilin synthase (PS) to yield premutilin. Premutilin synthase is a bifunctional enzyme composed of the fusion of a class II diterpene cyclase (DTC) and a class I diterpene synthase (DTS), with the corresponding domains and active sites containing characteristic aspartate-rich motifs. GGPP is first converted to mutildienyl-diphosphate (MPP) at the class II DTC site. MPP is subsequently further cyclized at the class I DTS site, followed by a 1,5-hydride shift and addition of water prior to terminating deprotonation, to yield premutilin. In addition to the aforementioned GGPP synthase and bifunctional diterpene synthase, the cluster also contains three cytochrome P450 monooxygenases, a short-chain alcohol dehydrogenase, and an acyltransferase, involved in the conversion of premutilin to pleuromutilin. The cytochrome P450 monooxygenases P450-1 and P450-2 hydroxylate premutilin at C-11 and C-3, respectively, producing 11-hydroxypremutilin and 3-hydroxypremutilin. The combination of the actions of both ple5 and ple6 leads to the production of 3,11-dihydroxypremutilin. The short chain dehydrogenase SDR further converts 3,11-dihydroxypremutilin into mutilin. The acetyltransferase ATF then acetylates mutilin to produce 14-O-acetylmutilin. Finally, the cytochrome P450 monooxygenase P450-3 catalyzes hydroxylation on the alpha position of the acetyl side chain of 14-O-acetylmutilin to yield pleuromutilin. The polypeptide is Geranylgeranyl pyrophosphate synthase (Clitopilus passeckerianus (Pleurotus passeckerianus)).